Here is a 183-residue protein sequence, read N- to C-terminus: Peptide deformylase (183 aa).

The Fe cation site is built by Cys-110 and His-153. Glu-154 is a catalytic residue. His-157 contributes to the Fe cation binding site.

It belongs to the polypeptide deformylase family. The cofactor is Fe(2+).

It catalyses the reaction N-terminal N-formyl-L-methionyl-[peptide] + H2O = N-terminal L-methionyl-[peptide] + formate. In terms of biological role, removes the formyl group from the N-terminal Met of newly synthesized proteins. Requires at least a dipeptide for an efficient rate of reaction. N-terminal L-methionine is a prerequisite for activity but the enzyme has broad specificity at other positions. This Shouchella clausii (strain KSM-K16) (Alkalihalobacillus clausii) protein is Peptide deformylase.